A 317-amino-acid polypeptide reads, in one-letter code: Protoheme IX farnesyltransferase (317 aa).

9 helical membrane passes run 43–63, 65–85, 119–139, 140–160, 168–188, 195–215, 238–258, 261–281, and 292–312; these read PISVGLLAFTAAAMMVVAGAT, PVSGWLFVQALLAVVLACAGA, ALYWGLFLFVASLGLAWNLNP, IAWITLWGGMLGYVVVYSLWL, IVIGGVSGGMPALFGWAAVTG, VLIAALVVLWIPNHIWSLAIF, LNWLLLTVVLMVVFSVLIYFV, WGLVYLATALVMGAAALALSV, and AWVLFKFSSPYLAVLFLSMMV.

The protein belongs to the UbiA prenyltransferase family. Protoheme IX farnesyltransferase subfamily. In terms of assembly, interacts with CtaA.

The protein resides in the cell membrane. The enzyme catalyses heme b + (2E,6E)-farnesyl diphosphate + H2O = Fe(II)-heme o + diphosphate. It participates in porphyrin-containing compound metabolism; heme O biosynthesis; heme O from protoheme: step 1/1. Functionally, converts heme B (protoheme IX) to heme O by substitution of the vinyl group on carbon 2 of heme B porphyrin ring with a hydroxyethyl farnesyl side group. This chain is Protoheme IX farnesyltransferase, found in Desulforudis audaxviator (strain MP104C).